Consider the following 415-residue polypeptide: uncharacterized protein (415 aa).

Disordered stretches follow at residues 39-77, 220-247, and 346-415; these read FLPPSSNTTLQKESQEGSPPPTQSQEPLKPMENVSRPIH, AEDKETTSKGSNAKEESKNGLHPKHPLT, and VTLN…NGSK. Composition is skewed to basic and acidic residues over residues 220–238, 365–380, and 400–415; these read AEDKETTSKGSNAKEESKN, DVNKDPKLNLCPDKHM, and SKTEKIYPEPRRNGSK.

This is an uncharacterized protein from Rattus norvegicus (Rat).